Consider the following 136-residue polypeptide: Small ribosomal subunit protein uS11c (136 aa).

A disordered region spans residues 1-22 (MAKAIPKKGSRGRIGSRKSTRK).

The protein belongs to the universal ribosomal protein uS11 family. In terms of assembly, part of the 30S ribosomal subunit.

Its subcellular location is the plastid. The protein localises to the chloroplast. The polypeptide is Small ribosomal subunit protein uS11c (Lactuca sativa (Garden lettuce)).